We begin with the raw amino-acid sequence, 859 residues long: Ubiquitin carboxyl-terminal hydrolase 23 (859 aa).

Residues 1 to 24 show a composition bias toward polar residues; that stretch reads MEVATSSTEITIQTDRDPSSNNNG. The interval 1-26 is disordered; it reads MEVATSSTEITIQTDRDPSSNNNGSC. One can recognise a USP domain in the interval 107–410; sequence AGLQNLGNTC…KAYMLFYVRD (304 aa). C116 functions as the Nucleophile in the catalytic mechanism. The Proton acceptor role is filled by H369. Disordered stretches follow at residues 722–749 and 822–859; these read MISSSDGAVTSDQQQPVGSSDLSEASQN and EESYRGPNPFQMLASKRQKETKKKWTQSITDAKTAYRI.

Belongs to the peptidase C19 family.

The enzyme catalyses Thiol-dependent hydrolysis of ester, thioester, amide, peptide and isopeptide bonds formed by the C-terminal Gly of ubiquitin (a 76-residue protein attached to proteins as an intracellular targeting signal).. Recognizes and hydrolyzes the peptide bond at the C-terminal Gly of ubiquitin. Involved in the processing of poly-ubiquitin precursors as well as that of ubiquitinated proteins. The protein is Ubiquitin carboxyl-terminal hydrolase 23 (UBP23) of Arabidopsis thaliana (Mouse-ear cress).